The sequence spans 271 residues: Putative phosphoenolpyruvate synthase regulatory protein (271 aa).

Residue 151–158 coordinates ADP; it reads GVSRSGKT.

Belongs to the pyruvate, phosphate/water dikinase regulatory protein family. PSRP subfamily.

It carries out the reaction [pyruvate, water dikinase] + ADP = [pyruvate, water dikinase]-phosphate + AMP + H(+). It catalyses the reaction [pyruvate, water dikinase]-phosphate + phosphate + H(+) = [pyruvate, water dikinase] + diphosphate. Functionally, bifunctional serine/threonine kinase and phosphorylase involved in the regulation of the phosphoenolpyruvate synthase (PEPS) by catalyzing its phosphorylation/dephosphorylation. The protein is Putative phosphoenolpyruvate synthase regulatory protein of Burkholderia lata (strain ATCC 17760 / DSM 23089 / LMG 22485 / NCIMB 9086 / R18194 / 383).